A 199-amino-acid chain; its full sequence is ATP-dependent Clp protease proteolytic subunit (199 aa).

S99 functions as the Nucleophile in the catalytic mechanism. H124 is an active-site residue.

This sequence belongs to the peptidase S14 family. Fourteen ClpP subunits assemble into 2 heptameric rings which stack back to back to give a disk-like structure with a central cavity, resembling the structure of eukaryotic proteasomes.

It is found in the cytoplasm. The enzyme catalyses Hydrolysis of proteins to small peptides in the presence of ATP and magnesium. alpha-casein is the usual test substrate. In the absence of ATP, only oligopeptides shorter than five residues are hydrolyzed (such as succinyl-Leu-Tyr-|-NHMec, and Leu-Tyr-Leu-|-Tyr-Trp, in which cleavage of the -Tyr-|-Leu- and -Tyr-|-Trp bonds also occurs).. Functionally, cleaves peptides in various proteins in a process that requires ATP hydrolysis. Has a chymotrypsin-like activity. Plays a major role in the degradation of misfolded proteins. The sequence is that of ATP-dependent Clp protease proteolytic subunit from Lactococcus lactis subsp. cremoris (strain SK11).